The chain runs to 296 residues: Protoheme IX farnesyltransferase 2 (296 aa).

Transmembrane regions (helical) follow at residues L7–F27, P36–L56, L83–W103, L108–F128, Y134–V154, A163–F183, I207–G227, A229–L249, and F265–V285.

It belongs to the UbiA prenyltransferase family. Protoheme IX farnesyltransferase subfamily.

It localises to the cell inner membrane. It carries out the reaction heme b + (2E,6E)-farnesyl diphosphate + H2O = Fe(II)-heme o + diphosphate. Its pathway is porphyrin-containing compound metabolism; heme O biosynthesis; heme O from protoheme: step 1/1. Converts heme B (protoheme IX) to heme O by substitution of the vinyl group on carbon 2 of heme B porphyrin ring with a hydroxyethyl farnesyl side group. This is Protoheme IX farnesyltransferase 2 from Pseudomonas paraeruginosa (strain DSM 24068 / PA7) (Pseudomonas aeruginosa (strain PA7)).